Reading from the N-terminus, the 401-residue chain is Exodeoxyribonuclease 7 large subunit (401 aa).

Belongs to the XseA family. As to quaternary structure, heterooligomer composed of large and small subunits.

It localises to the cytoplasm. The catalysed reaction is Exonucleolytic cleavage in either 5'- to 3'- or 3'- to 5'-direction to yield nucleoside 5'-phosphates.. Its function is as follows. Bidirectionally degrades single-stranded DNA into large acid-insoluble oligonucleotides, which are then degraded further into small acid-soluble oligonucleotides. This Clostridium botulinum (strain Hall / ATCC 3502 / NCTC 13319 / Type A) protein is Exodeoxyribonuclease 7 large subunit.